We begin with the raw amino-acid sequence, 107 residues long: MQFSTTPTLEGQVIVEYCGVVTGEAILGANIFRDFFAGIRDIVGGRSGAYEKELRKAREIAFRELGDQAASLGADAVVGIDIDYETVGKDGSMLMVSVSGTAVKTRR.

Belongs to the UPF0145 family.

This chain is UPF0145 protein ESA_02470, found in Cronobacter sakazakii (strain ATCC BAA-894) (Enterobacter sakazakii).